Here is a 535-residue protein sequence, read N- to C-terminus: MICLGLEGTAEKTGVGIVTSDGEVLFNKTIMYKPPKQGINPREAADHHAETFPKLIKEAFEVVDKNEIDLIAFSQGPGLGPSLRVTATVARTLSLTLKKPIIGVNHCIAHIEIGKLTTEAEDPLTLYVSGGNTQVIAYVSKKYRVFGETLDIAVGNCLDQFARYVNLPHPGGPYIEELARKGKKLVDLPYTVKGMDIAFSGLLTAAMRAYDAGERLEDICYSLQEYAFSMLTEITERALAHTNKGEVMLVGGVAANNRLREMLKAMCEGQNVDFYVPPKEFCGDNGAMIAWLGLLMHKNGRWMSLDETKIIPNYRTDMVEVNWIKEIKGKKRKIPEHLIGKGAEADIKRDSYLDFDVIIKERVKKGYRDERLDENIRKSRTAREARYLALVKDFGIPAPYIFDVDLDNKRIMMSYINGKLAKDVIEDNLDIAYKIGEIVGKLHKNDVIHNDLTTSNFIFDKDLYIIDFGLGKISNLDEDKAVDLIVFKKAVLSTHHEKFDEIWERFLEGYKSVYDRWEIILELMKDVERRARYVE.

Residues 1–323 (MICLGLEGTA…YRTDMVEVNW (323 aa)) are kae1. Fe cation is bound by residues H106, H110, and Y127. Residues 127-131 (YVSGG), D159, G172, E176, and N256 each bind L-threonylcarbamoyladenylate. D284 lines the Fe cation pocket. One can recognise a Protein kinase domain in the interval 333-535 (KIPEHLIGKG…DVERRARYVE (203 aa)). ATP-binding positions include 339–347 (IGKGAEADI) and K360. D451 (proton acceptor; for kinase activity) is an active-site residue.

This sequence in the N-terminal section; belongs to the KAE1 / TsaD family. In the C-terminal section; belongs to the protein kinase superfamily. Tyr protein kinase family. BUD32 subfamily. In terms of assembly, component of the KEOPS complex that consists of Kae1, Bud32, Cgi121 and Pcc1; the whole complex dimerizes. Fe(2+) serves as cofactor.

The protein localises to the cytoplasm. It catalyses the reaction L-seryl-[protein] + ATP = O-phospho-L-seryl-[protein] + ADP + H(+). It carries out the reaction L-threonyl-[protein] + ATP = O-phospho-L-threonyl-[protein] + ADP + H(+). The enzyme catalyses L-threonylcarbamoyladenylate + adenosine(37) in tRNA = N(6)-L-threonylcarbamoyladenosine(37) in tRNA + AMP + H(+). Activity provided by the Kae1 region seems to be regulated via phosphorylation by the protein kinase Bud32, which is itself activated by Cgi121. In terms of biological role, required for the formation of a threonylcarbamoyl group on adenosine at position 37 (t(6)A37) in tRNAs that read codons beginning with adenine. Is a component of the KEOPS complex that is probably involved in the transfer of the threonylcarbamoyl moiety of threonylcarbamoyl-AMP (TC-AMP) to the N6 group of A37. The Kae1 domain likely plays a direct catalytic role in this reaction. The Bud32 domain probably displays kinase activity that regulates Kae1 function. In vitro, exhibits low ATPase activity, but does not bind DNA and does not have endonuclease activity. In Methanocaldococcus jannaschii (strain ATCC 43067 / DSM 2661 / JAL-1 / JCM 10045 / NBRC 100440) (Methanococcus jannaschii), this protein is Probable bifunctional tRNA threonylcarbamoyladenosine biosynthesis protein.